The chain runs to 175 residues: Major oleosin NAP-II (175 aa).

Residues arginine 1 to lysine 47 are polar. 2 consecutive repeats follow at residues arginine 17–glycine 26 and arginine 27–glycine 36. The hydrophobic stretch occupies residues alanine 48–tyrosine 119. 3 helical membrane passes run glycine 56 to alanine 76, proline 78 to isoleucine 98, and threonine 99 to tyrosine 119. Residues alanine 151–threonine 175 are disordered.

It belongs to the oleosin family.

It is found in the lipid droplet. The protein localises to the membrane. In terms of biological role, may have a structural role to stabilize the lipid body during desiccation of the seed by preventing coalescence of the oil. Probably interacts with both lipid and phospholipid moieties of lipid bodies. May also provide recognition signals for specific lipase anchorage in lipolysis during seedling growth. The chain is Major oleosin NAP-II from Brassica napus (Rape).